The chain runs to 64 residues: Large ribosomal subunit protein bL35 (64 aa).

The segment at 1-23 is disordered; that stretch reads MPKMKTKSGAAKRFKKTANGFKH.

The protein belongs to the bacterial ribosomal protein bL35 family.

This is Large ribosomal subunit protein bL35 from Stutzerimonas stutzeri (strain A1501) (Pseudomonas stutzeri).